The following is a 604-amino-acid chain: Serine/threonine-protein kinase A-Raf (604 aa).

The RBD domain maps to 19–91; sequence GTVKVYLPNK…DGEELIVEVL (73 aa). Residues 98-144 form a Phorbol-ester/DAG-type zinc finger; it reads MHNFVRKTFFSLAFCDFCLKFLFHGFRCQTCGYKFHQHCSSKVPTVC. Residues His99, Cys112, Cys115, Cys125, Cys128, His133, Cys136, and Cys144 each coordinate Zn(2+). Phosphoserine is present on residues Ser157 and Ser162. Disordered stretches follow at residues 177–222 and 241–288; these read NELL…HMVS and TDAA…EKKK. At Thr181 the chain carries Phosphothreonine. Position 186 is a phosphoserine (Ser186). Positions 210 to 222 are enriched in polar residues; the sequence is IRSTSTPNVHMVS. The segment covering 252–265 has biased composition (low complexity); it reads PRGSPSPASVSSGR. Ser255 and Ser267 each carry phosphoserine. Basic and acidic residues predominate over residues 272–287; that stretch reads LPSEQRERKSLADEKK. The region spanning 308-568 is the Protein kinase domain; the sequence is VQLLKRIGTG…PQILATIELL (261 aa). ATP contacts are provided by residues 314–322 and Lys334; that span reads IGTGSFGTV. Thr316 carries the post-translational modification Phosphothreonine. Catalysis depends on Asp427, which acts as the Proton acceptor.

It belongs to the protein kinase superfamily. TKL Ser/Thr protein kinase family. RAF subfamily. As to quaternary structure, interacts with TH1L/NELFD. Requires Zn(2+) as cofactor. Post-translationally, dephosphorylation by the SHOC2-MRAS-PP1c (SMP) complex consisting of SHOC2, GTP-bound M-Ras/MRAS and the catalytic subunit of protein phosphatase 1 (PPP1CA, PPP1CB or PPP1CC); this relieves inactivation and stimulates kinase activity.

The catalysed reaction is L-seryl-[protein] + ATP = O-phospho-L-seryl-[protein] + ADP + H(+). The enzyme catalyses L-threonyl-[protein] + ATP = O-phospho-L-threonyl-[protein] + ADP + H(+). In terms of biological role, involved in the transduction of mitogenic signals from the cell membrane to the nucleus. May also regulate the TOR signaling cascade. Phosphorylates PFKFB2. This chain is Serine/threonine-protein kinase A-Raf (Araf), found in Mus musculus (Mouse).